An 83-amino-acid chain; its full sequence is Exodeoxyribonuclease 7 small subunit (83 aa).

It belongs to the XseB family. As to quaternary structure, heterooligomer composed of large and small subunits.

The protein resides in the cytoplasm. It catalyses the reaction Exonucleolytic cleavage in either 5'- to 3'- or 3'- to 5'-direction to yield nucleoside 5'-phosphates.. Its function is as follows. Bidirectionally degrades single-stranded DNA into large acid-insoluble oligonucleotides, which are then degraded further into small acid-soluble oligonucleotides. In Allorhizobium ampelinum (strain ATCC BAA-846 / DSM 112012 / S4) (Agrobacterium vitis (strain S4)), this protein is Exodeoxyribonuclease 7 small subunit.